A 647-amino-acid chain; its full sequence is Threonine--tRNA ligase (647 aa).

A TGS domain is found at 1 to 60 (MQVTIEDQSLEAAAGEACGQVLSRAVSGKRLKNAVACLVDGQPRDLAFPLPEDAHELALV). Positions 242 to 533 (DHRKLGAQLD…LIEHTAGALP (292 aa)) are catalytic. Zn(2+) contacts are provided by cysteine 334, histidine 385, and histidine 510.

Belongs to the class-II aminoacyl-tRNA synthetase family. In terms of assembly, homodimer. Zn(2+) is required as a cofactor.

It localises to the cytoplasm. The enzyme catalyses tRNA(Thr) + L-threonine + ATP = L-threonyl-tRNA(Thr) + AMP + diphosphate + H(+). Functionally, catalyzes the attachment of threonine to tRNA(Thr) in a two-step reaction: L-threonine is first activated by ATP to form Thr-AMP and then transferred to the acceptor end of tRNA(Thr). Also edits incorrectly charged L-seryl-tRNA(Thr). The chain is Threonine--tRNA ligase from Solidesulfovibrio magneticus (strain ATCC 700980 / DSM 13731 / RS-1) (Desulfovibrio magneticus).